The following is a 354-amino-acid chain: Protein sex-lethal (354 aa).

Positions 1–20 are disordered; sequence MYGNNNPGSNNNNGGYPPYG. RRM domains lie at 127 to 205 and 213 to 293; these read TNLI…YARP and TNLY…LAQE.

In terms of assembly, part of a complex containing fl(2)d, Sxl and vir. Interacts with nito. Interacts with Unr; cooperates with Sxl to prevent translation of msl-2 transcripts. Interacts with how; promoting nuclear retention of msl-2 transcripts. As to expression, the embryo-specific isoform is not expressed in the pole cells, which are the progenitors of the germline.

It is found in the nucleus. The protein resides in the cytoplasm. Its function is as follows. Sex determination switch protein, which controls sexual development and dosage compensation in females. Sxl protein is only active in females: it is inactive in males throughout development. Acts as a mRNA-binding protein, which specifically binds to a subset of pre-mRNAs and mRNAs and regulates their processing and/or translation. Promotes sexual development by controlling the female-specific alternative splicing of the transformer (tra) pre-mRNA: binds tightly to a characteristic uridine-rich polypyrimidine tract at the non-sex specific 3' splice site in one of the tra introns, preventing the general splicing factor U2AF from binding to this site and forcing it to bind to the female-specific 3' splice site. Acts as an inhibitor of dosage compensation in females by preventing production of msl-2 protein, an essential component of the MSL complex, the complex that mediates X-chromosome dosage compensation. Specifially binds to uridine stretches in both the 5'- and 3'-UTR of msl-2 transcripts. Sxl first acts at the splicing level by promoting retention of an intron in the 5' UTR of msl-2 pre-mRNA. The retained intron contains Sxl-binding sites that are required for subsequent steps of repression: after msl-2 mRNA export into the cytoplasm, Sxl coordinates its translational repression by targeting early steps of translation initiation. Together with how, Sxl also prevents production of msl-2 protein by preventing nuclear export of msl-2 transcripts. The sequence is that of Protein sex-lethal from Drosophila subobscura (Fruit fly).